Reading from the N-terminus, the 338-residue chain is Anthranilate phosphoribosyltransferase (338 aa).

Residues Gly81, Gly84 to Asp85, Thr89, Asn91 to Thr94, Lys109 to Ser117, and Ala121 contribute to the 5-phospho-alpha-D-ribose 1-diphosphate site. Gly81 contacts anthranilate. Residue Ser93 participates in Mg(2+) binding. An anthranilate-binding site is contributed by Asn112. Arg167 provides a ligand contact to anthranilate. Mg(2+) is bound by residues Asp225 and Glu226.

The protein belongs to the anthranilate phosphoribosyltransferase family. As to quaternary structure, homodimer. The cofactor is Mg(2+).

It catalyses the reaction N-(5-phospho-beta-D-ribosyl)anthranilate + diphosphate = 5-phospho-alpha-D-ribose 1-diphosphate + anthranilate. Its pathway is amino-acid biosynthesis; L-tryptophan biosynthesis; L-tryptophan from chorismate: step 2/5. In terms of biological role, catalyzes the transfer of the phosphoribosyl group of 5-phosphorylribose-1-pyrophosphate (PRPP) to anthranilate to yield N-(5'-phosphoribosyl)-anthranilate (PRA). The sequence is that of Anthranilate phosphoribosyltransferase from Rhizobium etli (strain CIAT 652).